The following is a 660-amino-acid chain: Elongation factor 4 (660 aa).

In terms of domain architecture, tr-type G spans 55–241 (AQIRNFCIIA…EVVRQVPPPQ (187 aa)). GTP contacts are provided by residues 67–72 (DHGKST) and 188–191 (NKID).

Belongs to the TRAFAC class translation factor GTPase superfamily. Classic translation factor GTPase family. LepA subfamily.

It localises to the cell membrane. It catalyses the reaction GTP + H2O = GDP + phosphate + H(+). Functionally, required for accurate and efficient protein synthesis under certain stress conditions. May act as a fidelity factor of the translation reaction, by catalyzing a one-codon backward translocation of tRNAs on improperly translocated ribosomes. Back-translocation proceeds from a post-translocation (POST) complex to a pre-translocation (PRE) complex, thus giving elongation factor G a second chance to translocate the tRNAs correctly. Binds to ribosomes in a GTP-dependent manner. This is Elongation factor 4 from Mycolicibacterium paratuberculosis (strain ATCC BAA-968 / K-10) (Mycobacterium paratuberculosis).